We begin with the raw amino-acid sequence, 264 residues long: Taurine import ATP-binding protein TauB (264 aa).

Positions 4–233 (LQLERISAQY…RYAAGESARA (230 aa)) constitute an ABC transporter domain. 38-45 (GPSGSGKT) contacts ATP.

It belongs to the ABC transporter superfamily. Taurine importer (TC 3.A.1.17.1) family. The complex is composed of two ATP-binding proteins (TauB), two transmembrane proteins (TauC) and a solute-binding protein (TauA).

The protein localises to the cell inner membrane. It catalyses the reaction taurine(out) + ATP + H2O = taurine(in) + ADP + phosphate + H(+). Functionally, part of the ABC transporter complex TauABC involved in taurine import. Responsible for energy coupling to the transport system. The sequence is that of Taurine import ATP-binding protein TauB from Pseudomonas fluorescens (strain ATCC BAA-477 / NRRL B-23932 / Pf-5).